An 875-amino-acid polypeptide reads, in one-letter code: E3 SUMO-protein ligase SIZ1 (875 aa).

One can recognise an SAP domain in the interval 12-46 (LAYFRIKELKDILNQLGLPKQGKKQDLIDRVLALL). The PHD-type zinc-finger motif lies at 114–169 (KVRCICSSTMVNDSMIQCEDQRCQVWQHLNCVLIPDKPGESAEVPPVFYCELCRLS). The SP-RING-type zinc-finger motif lies at 349 to 430 (SDLEVVAESV…FNRITSLLRN (82 aa)). Cys380, His382, Cys403, and Cys406 together coordinate Zn(2+). Residues 796 to 820 (GGGGNEEPAPADVNSQPQIPSTETG) are disordered. The span at 808 to 819 (VNSQPQIPSTET) shows a compositional bias: polar residues.

The protein belongs to the PIAS family.

It localises to the nucleus. Its pathway is protein modification; protein sumoylation. In terms of biological role, probable SUMO E3 ligase that may regulate Pi starvation responses. This is E3 SUMO-protein ligase SIZ1 (SIZ1) from Oryza sativa subsp. japonica (Rice).